The chain runs to 143 residues: Probable FAD-linked sulfhydryl oxidase R368 (143 aa).

The ERV/ALR sulfhydryl oxidase domain maps to 10 to 104 (GWTFSHAVAL…YPEAIEAIEK (95 aa)). Residues Cys-46 and Cys-49 are joined by a disulfide bond. A helical membrane pass occupies residues 117–137 (FFIILIIIGIIVIIYLMYIVF).

It depends on FAD as a cofactor.

Its subcellular location is the membrane. It carries out the reaction 2 R'C(R)SH + O2 = R'C(R)S-S(R)CR' + H2O2. FAD-dependent sulfhydryl oxidase that catalyzes disulfide bond formation. The polypeptide is Probable FAD-linked sulfhydryl oxidase R368 (Acanthamoeba polyphaga mimivirus (APMV)).